The sequence spans 63 residues: U2-agatoxin-Ao1v (63 aa).

The first 14 residues, 1 to 14, serve as a signal peptide directing secretion; the sequence is LLLISAMVGSMIAA. Residues 15–28 constitute a propeptide that is removed on maturation; sequence VPEEESLQLSEDER. 3 disulfide bridges follow: Cys31–Cys47, Cys38–Cys52, and Cys46–Cys62.

The protein belongs to the neurotoxin 01 (U2-agtx) family. Expressed by the venom gland.

The protein localises to the secreted. Functionally, insect active toxin causing rapid but reversible paralysis in crickets. No activity shown in mammals. Does not show effect on mammalian voltage-gated calcium channels. The chain is U2-agatoxin-Ao1v from Agelena orientalis (Funnel-web spider).